A 492-amino-acid polypeptide reads, in one-letter code: Ribose import ATP-binding protein RbsA (492 aa).

ABC transporter domains are found at residues Ile-3–Lys-239 and Arg-238–Lys-492. Gly-35–Ser-42 contributes to the ATP binding site.

It belongs to the ABC transporter superfamily. Ribose importer (TC 3.A.1.2.1) family. The complex is composed of an ATP-binding protein (RbsA), two transmembrane proteins (RbsC) and a solute-binding protein (RbsB).

It is found in the cell membrane. It catalyses the reaction D-ribose(out) + ATP + H2O = D-ribose(in) + ADP + phosphate + H(+). Functionally, part of the ABC transporter complex RbsABC involved in ribose import. Responsible for energy coupling to the transport system. This chain is Ribose import ATP-binding protein RbsA, found in Streptococcus agalactiae serotype Ia (strain ATCC 27591 / A909 / CDC SS700).